The chain runs to 334 residues: Holliday junction branch migration complex subunit RuvB (334 aa).

A large ATPase domain (RuvB-L) region spans residues 1-179; sequence MTHKISVLHQ…FAFTGRVDYY (179 aa). Residues leucine 18, arginine 19, glycine 60, lysine 63, threonine 64, serine 65, 126-128, arginine 169, tyrosine 179, and arginine 216 contribute to the ATP site; that span reads EDF. Residue threonine 64 participates in Mg(2+) binding. The tract at residues 180–250 is small ATPAse domain (RuvB-S); that stretch reads TDEDLVSILS…VAEKALAMLL (71 aa). The head domain (RuvB-H) stretch occupies residues 253–334; the sequence is NLGLNEIDIK…RNPKDRWGEE (82 aa). Arginine 308 and arginine 313 together coordinate DNA.

This sequence belongs to the RuvB family. As to quaternary structure, homohexamer. Forms an RuvA(8)-RuvB(12)-Holliday junction (HJ) complex. HJ DNA is sandwiched between 2 RuvA tetramers; dsDNA enters through RuvA and exits via RuvB. An RuvB hexamer assembles on each DNA strand where it exits the tetramer. Each RuvB hexamer is contacted by two RuvA subunits (via domain III) on 2 adjacent RuvB subunits; this complex drives branch migration. In the full resolvosome a probable DNA-RuvA(4)-RuvB(12)-RuvC(2) complex forms which resolves the HJ.

It is found in the cytoplasm. It catalyses the reaction ATP + H2O = ADP + phosphate + H(+). In terms of biological role, the RuvA-RuvB-RuvC complex processes Holliday junction (HJ) DNA during genetic recombination and DNA repair, while the RuvA-RuvB complex plays an important role in the rescue of blocked DNA replication forks via replication fork reversal (RFR). RuvA specifically binds to HJ cruciform DNA, conferring on it an open structure. The RuvB hexamer acts as an ATP-dependent pump, pulling dsDNA into and through the RuvAB complex. RuvB forms 2 homohexamers on either side of HJ DNA bound by 1 or 2 RuvA tetramers; 4 subunits per hexamer contact DNA at a time. Coordinated motions by a converter formed by DNA-disengaged RuvB subunits stimulates ATP hydrolysis and nucleotide exchange. Immobilization of the converter enables RuvB to convert the ATP-contained energy into a lever motion, pulling 2 nucleotides of DNA out of the RuvA tetramer per ATP hydrolyzed, thus driving DNA branch migration. The RuvB motors rotate together with the DNA substrate, which together with the progressing nucleotide cycle form the mechanistic basis for DNA recombination by continuous HJ branch migration. Branch migration allows RuvC to scan DNA until it finds its consensus sequence, where it cleaves and resolves cruciform DNA. This is Holliday junction branch migration complex subunit RuvB from Chlamydia trachomatis serovar L2 (strain ATCC VR-902B / DSM 19102 / 434/Bu).